Reading from the N-terminus, the 264-residue chain is Indole-3-glycerol phosphate synthase (264 aa).

The protein belongs to the TrpC family.

It carries out the reaction 1-(2-carboxyphenylamino)-1-deoxy-D-ribulose 5-phosphate + H(+) = (1S,2R)-1-C-(indol-3-yl)glycerol 3-phosphate + CO2 + H2O. It participates in amino-acid biosynthesis; L-tryptophan biosynthesis; L-tryptophan from chorismate: step 4/5. This Stenotrophomonas maltophilia (strain R551-3) protein is Indole-3-glycerol phosphate synthase.